Consider the following 188-residue polypeptide: MSSKLLSMKFMQRARGIDPKQAEEELSKNIVTDEHWSLAGKVDFLPQKMTRNVEYESGYGGLIEENDLESHSNEPNLVQGRASFGLFNKELGEENVDEKDVSKNEEVDVNGTKITDTSELTERERRKQELVSKKAEASRKMEVKAPAKESKKRKVNELSQDVISLHSPKESNARKTKKNKNKKKKKRN.

The segment at glutamate 93–asparagine 188 is disordered. The span at leucine 120–glutamate 149 shows a compositional bias: basic and acidic residues. Serine 167 is subject to Phosphoserine. Positions arginine 174–asparagine 188 are enriched in basic residues.

Belongs to the MPP6 family. As to quaternary structure, associates with the RNA exosome complex.

Its subcellular location is the nucleus. In terms of biological role, RNA-binding protein that associates with the RNA exosome complex. In Schizosaccharomyces pombe (strain 972 / ATCC 24843) (Fission yeast), this protein is M-phase phosphoprotein 6 homolog.